A 342-amino-acid polypeptide reads, in one-letter code: UDP-N-acetylglucosamine transporter YEA4 (342 aa).

Residues 1–6 lie on the Cytoplasmic side of the membrane; sequence MWNSLK. Residues 7 to 27 form a helical membrane-spanning segment; it reads AFALVFGGCCSNVITFETLMS. The Lumenal segment spans residues 28–35; sequence NETGSINN. The chain crosses the membrane as a helical span at residues 36 to 56; the sequence is LITFCQFLFVTCQGLPEFLDV. The Cytoplasmic segment spans residues 57-61; the sequence is HQPFP. The chain crosses the membrane as a helical span at residues 62-82; that stretch reads YFKPLKTPLHVYVITVVLFYI. Topologically, residues 83 to 96 are lumenal; sequence SSTTNNNVFKYNIS. Residues 97–117 form a helical membrane-spanning segment; that stretch reads IPIHIVFRCFGTVITMFTCWL. The Cytoplasmic portion of the chain corresponds to 118–123; it reads LNGRKY. The helical transmembrane segment at 124–144 threads the bilayer; that stretch reads TKIQILSTLFLTIGAIIASLF. Residues 145–168 lie on the Lumenal side of the membrane; sequence KDADFRYQDLKLQAWKIGSDQSVD. A helical membrane pass occupies residues 169–189; the sequence is LTFIFGICILVLSSFTSSLLS. Residues 190–253 lie on the Cytoplasmic side of the membrane; that stretch reads AYNERTYQKY…GGKILVPREE (64 aa). Residues 254–274 form a helical membrane-spanning segment; that stretch reads TLLLFNVLTQYFCVKGVNILA. The Lumenal portion of the chain corresponds to 275-307; it reads SKTNALTLSITLLVRKFISLLLSVRLFDNNLSY. The chain crosses the membrane as a helical span at residues 308 to 328; sequence TGYIGVYLVFFGAFIYSLGSI. The Cytoplasmic segment spans residues 329-342; that stretch reads HPRQNDKGAIKKSK.

The protein belongs to the nucleotide-sugar transporter family. SLC35B subfamily.

It is found in the endoplasmic reticulum. It localises to the endoplasmic reticulum membrane. Sugar transporter that specifically mediates the transport of UDP-N-acetylglucosamine (UDP-GlcNAc) and is required for cell wall chitin synthesis. In Saccharomyces cerevisiae (strain ATCC 204508 / S288c) (Baker's yeast), this protein is UDP-N-acetylglucosamine transporter YEA4 (YEA4).